A 134-amino-acid polypeptide reads, in one-letter code: S-adenosylmethionine decarboxylase proenzyme (134 aa).

Catalysis depends on Ser-64, which acts as the Schiff-base intermediate with substrate; via pyruvic acid. Ser-64 carries the post-translational modification Pyruvic acid (Ser); by autocatalysis. His-69 serves as the catalytic Proton acceptor; for processing activity. Residue Cys-84 is the Proton donor; for catalytic activity of the active site.

It belongs to the prokaryotic AdoMetDC family. Type 1 subfamily. Heterotetramer of two alpha and two beta chains arranged as a dimer of alpha/beta heterodimers. The cofactor is pyruvate. In terms of processing, is synthesized initially as an inactive proenzyme. Formation of the active enzyme involves a self-maturation process in which the active site pyruvoyl group is generated from an internal serine residue via an autocatalytic post-translational modification. Two non-identical subunits are generated from the proenzyme in this reaction, and the pyruvate is formed at the N-terminus of the alpha chain, which is derived from the carboxyl end of the proenzyme. The post-translation cleavage follows an unusual pathway, termed non-hydrolytic serinolysis, in which the side chain hydroxyl group of the serine supplies its oxygen atom to form the C-terminus of the beta chain, while the remainder of the serine residue undergoes an oxidative deamination to produce ammonia and the pyruvoyl group blocking the N-terminus of the alpha chain.

It carries out the reaction S-adenosyl-L-methionine + H(+) = S-adenosyl 3-(methylsulfanyl)propylamine + CO2. It participates in amine and polyamine biosynthesis; S-adenosylmethioninamine biosynthesis; S-adenosylmethioninamine from S-adenosyl-L-methionine: step 1/1. Its function is as follows. Catalyzes the decarboxylation of S-adenosylmethionine to S-adenosylmethioninamine (dcAdoMet), the propylamine donor required for the synthesis of the polyamines spermine and spermidine from the diamine putrescine. The chain is S-adenosylmethionine decarboxylase proenzyme from Hydrogenobaculum sp. (strain Y04AAS1).